The following is a 204-amino-acid chain: N-alpha-acetyltransferase 40 (204 aa).

One can recognise an N-acetyltransferase domain in the interval 39 to 202 (EIYHHLEKGL…YYILYTKSRK (164 aa)). Substrate contacts are provided by residues Tyr64, 107–109 (TVE), and Tyr118. Residues 120–122 (IQL) and 128–133 (GRNVGK) contribute to the acetyl-CoA site. Position 154 (Thr154) interacts with substrate. Acetyl-CoA is bound at residue Asn159. Position 176 (Ser176) interacts with substrate.

This sequence belongs to the acetyltransferase family. NAA40 subfamily.

It is found in the cytoplasm. Its subcellular location is the nucleus. It catalyses the reaction N-terminal L-seryl-[histone H4] + acetyl-CoA = N-terminal N(alpha)-acetyl-L-seryl-[histone H4] + CoA + H(+). The enzyme catalyses N-terminal L-seryl-[histone H2A] + acetyl-CoA = N-terminal N(alpha)-acetyl-L-seryl-[histone H2A] + CoA + H(+). Functionally, N-alpha-acetyltransferase that specifically mediates the acetylation of the N-terminal residues of histones H4 and H2A. The chain is N-alpha-acetyltransferase 40 from Schizosaccharomyces pombe (strain 972 / ATCC 24843) (Fission yeast).